The primary structure comprises 255 residues: TIR domain-containing protein (255 aa).

Residues 9–185 (LSDQVFINFR…DIVKEVKKQL (177 aa)) enclose the TIR domain. Glu83 is an active-site residue. The next 2 membrane-spanning stretches (helical) occupy residues 195–215 (AIGVAFLAITINLIFSFFIAP) and 223–243 (FFQTPEWFIGTLAVVLASWFW). Residues 201-255 (LAITINLIFSFFIAPKYLPDQKFFQTPEWFIGTLAVVLASWFWYKNNQNKAPPPS) form the KASH domain.

In terms of assembly, forms homomers. Interacts with SUN1, SUN2, SUN3, SUN4 and SUN5.

The protein resides in the nucleus membrane. The catalysed reaction is NAD(+) + H2O = ADP-D-ribose + nicotinamide + H(+). Functionally, could play a role in nuclear morphology, specifically nuclear size. This is TIR domain-containing protein from Arabidopsis thaliana (Mouse-ear cress).